The primary structure comprises 288 residues: ATP synthase gamma chain (288 aa).

The protein belongs to the ATPase gamma chain family. As to quaternary structure, F-type ATPases have 2 components, CF(1) - the catalytic core - and CF(0) - the membrane proton channel. CF(1) has five subunits: alpha(3), beta(3), gamma(1), delta(1), epsilon(1). CF(0) has three main subunits: a, b and c.

The protein localises to the cell inner membrane. In terms of biological role, produces ATP from ADP in the presence of a proton gradient across the membrane. The gamma chain is believed to be important in regulating ATPase activity and the flow of protons through the CF(0) complex. In Aliivibrio salmonicida (strain LFI1238) (Vibrio salmonicida (strain LFI1238)), this protein is ATP synthase gamma chain.